The following is a 131-amino-acid chain: Large ribosomal subunit protein bL19 (131 aa).

This sequence belongs to the bacterial ribosomal protein bL19 family.

Functionally, this protein is located at the 30S-50S ribosomal subunit interface and may play a role in the structure and function of the aminoacyl-tRNA binding site. This chain is Large ribosomal subunit protein bL19, found in Anaeromyxobacter sp. (strain K).